The following is a 39-amino-acid chain: Large ribosomal subunit protein bL36 (39 aa).

Belongs to the bacterial ribosomal protein bL36 family.

The protein is Large ribosomal subunit protein bL36 of Pediococcus pentosaceus (strain ATCC 25745 / CCUG 21536 / LMG 10740 / 183-1w).